The primary structure comprises 646 residues: bZIP transcription factor 39 (646 aa).

Topologically, residues 1–311 (MAEPALLDPT…KSKSKTKTKK (311 aa)) are cytoplasmic. The segment at 25-172 (HELPLAGGGG…GGTVCEEEED (148 aa)) is disordered. Low complexity predominate over residues 43–53 (LDGLEFDLPGD). The segment covering 59–69 (FLLRSPERDDS) has biased composition (basic and acidic residues). Residues 71–98 (EGSAAGSGPTASPSSSPTTSASNSAVAN) show a composition bias toward low complexity. Over residues 103-113 (EVKHEESDEGR) the composition is skewed to basic and acidic residues. Acidic residues predominate over residues 159–172 (DSDEGGTVCEEEED). Positions 172–232 (DERRAARLMR…AENATLRQQL (61 aa)) constitute a bZIP domain. The interval 174–205 (RRAARLMRNRESAQLSRQRKKRYVEELEEKVK) is basic motif. Residues 211–218 (INDLNSRI) are leucine-zipper. The interval 272 to 308 (LVPIPRLKPQQPVPSSKVVKKPESKKTVENKSKSKTK) is disordered. Over residues 279-288 (KPQQPVPSSK) the composition is skewed to low complexity. The span at 291-303 (KKPESKKTVENKS) shows a compositional bias: basic and acidic residues. The chain crosses the membrane as a helical span at residues 312-332 (VASVSLLGLLLIMLVFGAFIP). Residues 333-646 (GFNHNFGMCG…FKSSSPHLVN (314 aa)) are Lumenal-facing. Residues N371, N399, N525, N530, N565, and N571 are each glycosylated (N-linked (GlcNAc...) asparagine). A disordered region spans residues 560–585 (TGKTANNTEPFNRTSESSSKLPDSKP). Positions 562-585 (KTANNTEPFNRTSESSSKLPDSKP) are enriched in polar residues.

The protein belongs to the bZIP family. As to expression, highly expressed in leaf blade, and at lower levels in roots, leaf sheaths, flowers and seeds.

Its subcellular location is the endoplasmic reticulum membrane. It is found in the nucleus. In terms of biological role, transcription factor involved in endoplasmic reticulum (ER) stress response. Acts as a ER stress sensor and activates the transcription factor BZIP50 and the chaperone BIP1. This Oryza sativa subsp. japonica (Rice) protein is bZIP transcription factor 39.